The chain runs to 103 residues: Large ribosomal subunit protein uL24 (103 aa).

This sequence belongs to the universal ribosomal protein uL24 family. In terms of assembly, part of the 50S ribosomal subunit.

One of two assembly initiator proteins, it binds directly to the 5'-end of the 23S rRNA, where it nucleates assembly of the 50S subunit. Its function is as follows. One of the proteins that surrounds the polypeptide exit tunnel on the outside of the subunit. The protein is Large ribosomal subunit protein uL24 of Geobacillus stearothermophilus (Bacillus stearothermophilus).